The sequence spans 76 residues: MQLALAAKYIGAGISTIGLIGAGIGIGIVFAALINGVSRNPSLKDTLFSYSILGMALSEATGLFCLMISFMLLFAV.

2 consecutive transmembrane segments (helical) span residues 14–34 (ISTI…AALI) and 56–76 (ALSE…LFAV).

Belongs to the ATPase C chain family. F-type ATPases have 2 components, CF(1) - the catalytic core - and CF(0) - the membrane proton channel. CF(1) has five subunits: alpha(3), beta(3), gamma(1), delta(1), epsilon(1). CF(0) has three main subunits: a, b and c.

It is found in the mitochondrion membrane. In terms of biological role, mitochondrial membrane ATP synthase (F(1)F(0) ATP synthase or Complex V) produces ATP from ADP in the presence of a proton gradient across the membrane which is generated by electron transport complexes of the respiratory chain. F-type ATPases consist of two structural domains, F(1) - containing the extramembraneous catalytic core and F(0) - containing the membrane proton channel, linked together by a central stalk and a peripheral stalk. During catalysis, ATP synthesis in the catalytic domain of F(1) is coupled via a rotary mechanism of the central stalk subunits to proton translocation. Part of the complex F(0) domain. A homomeric c-ring of probably 10 subunits is part of the complex rotary element. The polypeptide is ATP synthase subunit 9, mitochondrial (ATP9) (Candida glabrata (strain ATCC 2001 / BCRC 20586 / JCM 3761 / NBRC 0622 / NRRL Y-65 / CBS 138) (Yeast)).